The chain runs to 208 residues: Translation initiation factor 6 (208 aa).

The protein belongs to the eIF-6 family.

Its function is as follows. Binds to the 50S ribosomal subunit and prevents its association with the 30S ribosomal subunit to form the 70S initiation complex. The sequence is that of Translation initiation factor 6 (eif6) from Nanoarchaeum equitans (strain Kin4-M).